The following is a 446-amino-acid chain: D-inositol 3-phosphate glycosyltransferase (446 aa).

H19 contributes to the 1D-myo-inositol 3-phosphate binding site. UDP-N-acetyl-alpha-D-glucosamine-binding positions include 25 to 26 and G33; that span reads QP. 1D-myo-inositol 3-phosphate is bound by residues 30-35, K88, Y121, T145, and R165; that span reads DAGGMN. Residues R239, K244, and Q303 each contribute to the UDP-N-acetyl-alpha-D-glucosamine site. Mg(2+) contacts are provided by Y312, R313, and S315. UDP-N-acetyl-alpha-D-glucosamine contacts are provided by E325 and E333. Residue T339 coordinates Mg(2+).

This sequence belongs to the glycosyltransferase group 1 family. MshA subfamily. As to quaternary structure, homodimer.

The catalysed reaction is 1D-myo-inositol 3-phosphate + UDP-N-acetyl-alpha-D-glucosamine = 1D-myo-inositol 2-acetamido-2-deoxy-alpha-D-glucopyranoside 3-phosphate + UDP + H(+). Catalyzes the transfer of a N-acetyl-glucosamine moiety to 1D-myo-inositol 3-phosphate to produce 1D-myo-inositol 2-acetamido-2-deoxy-glucopyranoside 3-phosphate in the mycothiol biosynthesis pathway. The chain is D-inositol 3-phosphate glycosyltransferase from Rhodococcus opacus (strain B4).